Consider the following 264-residue polypeptide: Thiazole synthase (264 aa).

Lysine 106 functions as the Schiff-base intermediate with DXP in the catalytic mechanism. 1-deoxy-D-xylulose 5-phosphate-binding positions include glycine 167, 193-194 (AG), and 215-216 (NT).

It belongs to the ThiG family. Homotetramer. Forms heterodimers with either ThiH or ThiS.

The protein localises to the cytoplasm. It catalyses the reaction [ThiS sulfur-carrier protein]-C-terminal-Gly-aminoethanethioate + 2-iminoacetate + 1-deoxy-D-xylulose 5-phosphate = [ThiS sulfur-carrier protein]-C-terminal Gly-Gly + 2-[(2R,5Z)-2-carboxy-4-methylthiazol-5(2H)-ylidene]ethyl phosphate + 2 H2O + H(+). Its pathway is cofactor biosynthesis; thiamine diphosphate biosynthesis. In terms of biological role, catalyzes the rearrangement of 1-deoxy-D-xylulose 5-phosphate (DXP) to produce the thiazole phosphate moiety of thiamine. Sulfur is provided by the thiocarboxylate moiety of the carrier protein ThiS. In vitro, sulfur can be provided by H(2)S. This chain is Thiazole synthase, found in Thioalkalivibrio sulfidiphilus (strain HL-EbGR7).